Here is a 70-residue protein sequence, read N- to C-terminus: Homeobox protein OTX2 (70 aa).

Residues H34–S70 are disordered. Residues P45 to S70 are compositionally biased toward polar residues.

Belongs to the paired homeobox family. Bicoid subfamily.

The protein localises to the nucleus. Functionally, transcription factor probably involved in the development of the brain and the sense organs. Can bind to the bicoid/BCD target sequence (BTS): 5'-TCTAATCCC-3'. The protein is Homeobox protein OTX2 (Otx2) of Rattus norvegicus (Rat).